The following is a 118-amino-acid chain: Large ribosomal subunit protein uL18 (118 aa).

Belongs to the universal ribosomal protein uL18 family. In terms of assembly, part of the 50S ribosomal subunit; part of the 5S rRNA/L5/L18/L25 subcomplex. Contacts the 5S and 23S rRNAs.

Functionally, this is one of the proteins that bind and probably mediate the attachment of the 5S RNA into the large ribosomal subunit, where it forms part of the central protuberance. The chain is Large ribosomal subunit protein uL18 from Mycoplasmopsis pulmonis (strain UAB CTIP) (Mycoplasma pulmonis).